Here is a 1449-residue protein sequence, read N- to C-terminus: Actin cytoskeleton-regulatory complex protein PAN1 (1449 aa).

Low complexity-rich tracts occupy residues 1–18 (MYNPYQQQQAAYNPQQQQ) and 27–36 (QQQQYVQPQQ). A disordered region spans residues 1 to 86 (MYNPYQQQQA…AQQPSIQPQQ (86 aa)). The span at 49 to 86 (PNQATGFYQPQQQGMFNASSFQNQPTGFAQQPSIQPQQ) shows a compositional bias: polar residues. Residues 128–217 (DQSKFEHLFR…EKWSNEVKSF (90 aa)) enclose the EH 1 domain. Positions 161 to 196 (LQPITLAEIWSLADTNKSGSLLFPEFALALHLCNLS) constitute an EF-hand 1 domain. 4 stretches are compositionally biased toward polar residues: residues 239–249 (ASSGASSNPIN), 258–275 (TGFNNSGAVPSTSFQAQP), 296–306 (QQATGFGSNNV), and 323–353 (QPQQTSNLIPAQKTGPLQPQTTGFQTQNPHQ). Disordered stretches follow at residues 239 to 366 (ASSG…STGF) and 386 to 427 (TTGF…GKPG). The span at 386 to 397 (TTGFQPQSTGFQ) shows a compositional bias: low complexity. Over residues 398–422 (PQSTGFQPQSTGFQPQQTGPLQAQP) the composition is skewed to polar residues. The EH 2 domain maps to 480 to 569 (EKQIYDGVFS…PELVPPSTKH (90 aa)). Residues 513 to 548 (LARPDLESIWNLADTNNRGKLNKDEFAVAMHLVYRR) form the EF-hand 2 domain. A compositionally biased stretch (polar residues) spans 579 to 588 (NSLKSGSAKS). 3 disordered regions span residues 579-638 (NSLK…SHNS), 877-935 (NSSK…PEER), and 956-1418 (LTRH…DIGA). The segment covering 595–606 (GKTDGKRYKNDD) has biased composition (basic and acidic residues). Low complexity predominate over residues 878-888 (SSKPKQQSSSQ). Composition is skewed to polar residues over residues 889 to 907 (VNSTLSQGQPQTQPQSNNV), 914 to 926 (PQVTGASDSSTAS), and 959 to 986 (HMTSGSSSTIEQQTQNKTTSLYANSETS). Low complexity-rich tracts occupy residues 996 to 1009 (QPEYQQQQQQQQQQ) and 1016 to 1026 (RQQSQQEAQLQ). Positions 1027–1036 (DKGTNGQPDS) are enriched in polar residues. A compositionally biased stretch (acidic residues) spans 1048-1058 (MDNESDDDNEE). Positions 1050–1108 (NESDDDNEEYVALMKKKEEMEARERKRKLKKKQDKEARLEKLKREMEELKKKEEAGDSS) form a coiled coil. Basic and acidic residues-rich tracts occupy residues 1064 to 1073 (KKKEEMEARE) and 1082 to 1104 (QDKEARLEKLKREMEELKKKEEA). Residues 1105–1114 (GDSSDDEEPI) are compositionally biased toward acidic residues. 2 stretches are compositionally biased toward low complexity: residues 1118-1134 (ASYGPSGSASKSSTTKS) and 1174-1185 (NNSSTPGSNNGS). A compositionally biased stretch (basic and acidic residues) spans 1192–1203 (KPEKEVKLDPKK). Residues 1219–1231 (DWSDEEENSSEDE) are compositionally biased toward acidic residues. Residues 1253 to 1263 (VPKSSTVTPNQ) are compositionally biased toward polar residues. The span at 1264–1283 (EFHDAEDIPHFDSQESKENN) shows a compositional bias: basic and acidic residues. A compositionally biased stretch (polar residues) spans 1284 to 1295 (NGEYTSQPTSVI). The span at 1325–1395 (FTPPPPPPPS…PPPRGAPPLP (71 aa)) shows a compositional bias: pro residues. Positions 1415-1432 (DIGALLGQIKTGSSLKKV) constitute a WH2 domain.

It belongs to the PAN1 family. Component of the PAN1 actin cytoskeleton-regulatory complex.

The protein resides in the cell membrane. Its subcellular location is the endosome membrane. It is found in the cytoplasm. The protein localises to the cytoskeleton. It localises to the actin patch. Component of the PAN1 actin cytoskeleton-regulatory complex required for the internalization of endosomes during actin-coupled endocytosis. The complex links the site of endocytosis to the cell membrane-associated actin cytoskeleton. Mediates uptake of external molecules and vacuolar degradation of plasma membrane proteins. Plays a role in the proper organization of the cell membrane-associated actin cytoskeleton and promotes its destabilization. The polypeptide is Actin cytoskeleton-regulatory complex protein PAN1 (PAN1) (Debaryomyces hansenii (strain ATCC 36239 / CBS 767 / BCRC 21394 / JCM 1990 / NBRC 0083 / IGC 2968) (Yeast)).